Consider the following 65-residue polypeptide: Translational regulator CsrA (65 aa).

This sequence belongs to the CsrA/RsmA family. As to quaternary structure, homodimer; the beta-strands of each monomer intercalate to form a hydrophobic core, while the alpha-helices form wings that extend away from the core.

Its subcellular location is the cytoplasm. In terms of biological role, a key translational regulator that binds mRNA to regulate translation initiation and/or mRNA stability. Mediates global changes in gene expression, shifting from rapid growth to stress survival by linking envelope stress, the stringent response and the catabolite repression systems. Usually binds in the 5'-UTR; binding at or near the Shine-Dalgarno sequence prevents ribosome-binding, repressing translation, binding elsewhere in the 5'-UTR can activate translation and/or stabilize the mRNA. Its function is antagonized by small RNA(s). This Pseudomonas putida (strain ATCC 47054 / DSM 6125 / CFBP 8728 / NCIMB 11950 / KT2440) protein is Translational regulator CsrA.